The primary structure comprises 199 residues: MNNSVLTKKLFLLKILTNNIEGKITENFEEIDNEIKQKIEKAKNTKIYQKNENSKEPAKLPLENQNSKNILLNNSLQEKGINDQIIIYVNKNYLNEPSRDIITKWCKSINIYNYKIIDTIESLNLEISNKNPKAILSCEEIDFFLNQPLRIHIVRGIELRFKGIPLVFTYLPTNQIKNPELKKEIWQDLKIIKGIIKYG.

This is an uncharacterized protein from Borreliella burgdorferi (strain ATCC 35210 / DSM 4680 / CIP 102532 / B31) (Borrelia burgdorferi).